Consider the following 472-residue polypeptide: Relaxin-3 receptor 1 (472 aa).

At 1–81 (MQVASATPAA…ESTDTEARVR (81 aa)) the chain is on the extracellular side. 2 N-linked (GlcNAc...) asparagine glycosylation sites follow: N36 and N40. Residues 82 to 102 (ILISAVYWVVCALGLAGNLLV) form a helical membrane-spanning segment. The Cytoplasmic portion of the chain corresponds to 103-119 (LYLMKSKQGWRKSSINL). Residues 120–140 (FVTNLALTDFQFVLTLPFWAV) form a helical membrane-spanning segment. Over 141-156 (ENALDFKWPFGKAMCK) the chain is Extracellular. Residues C155 and C247 are joined by a disulfide bond. The helical transmembrane segment at 157 to 177 (IVSMVTSMNMYASVFFLTAMS) threads the bilayer. The Cytoplasmic segment spans residues 178-215 (VARYHSVASALKSHRTRGRGRGDCCGQSLRESCCFSAK). A helical transmembrane segment spans residues 216 to 236 (VLCGLIWASAALASLPNAIFS). The Extracellular segment spans residues 237-270 (TTIRVLGEELCLMHFPDKLLGWDRQFWLGLYHLQ). A helical transmembrane segment spans residues 271-291 (KVLLGFLLPLSIISLCYLLLV). Residues 292–298 (RFISDRR) are Cytoplasmic-facing. Residues 299–319 (VVGTTDAVGAAAAPGGGLSTA) form a helical membrane-spanning segment. Over 320 to 332 (SARRRSKVTKSVT) the chain is Extracellular. The helical transmembrane segment at 333-353 (IVVLSFFLCWLPNQALTTWSI) threads the bilayer. Residues 354-472 (LIKFNAVPFS…YDLLPSSSAY (119 aa)) are Cytoplasmic-facing.

The protein belongs to the G-protein coupled receptor 1 family.

It is found in the cell membrane. In terms of biological role, receptor for RNL3/relaxin-3. Binding of the ligand inhibit cAMP accumulation. This chain is Relaxin-3 receptor 1 (Rxfp3), found in Mus musculus (Mouse).